Reading from the N-terminus, the 476-residue chain is Glycogen synthase (476 aa).

An ADP-alpha-D-glucose-binding site is contributed by Lys15.

This sequence belongs to the glycosyltransferase 1 family. Bacterial/plant glycogen synthase subfamily.

It carries out the reaction [(1-&gt;4)-alpha-D-glucosyl](n) + ADP-alpha-D-glucose = [(1-&gt;4)-alpha-D-glucosyl](n+1) + ADP + H(+). It participates in glycan biosynthesis; glycogen biosynthesis. In terms of biological role, synthesizes alpha-1,4-glucan chains using ADP-glucose. In Haemophilus influenzae (strain ATCC 51907 / DSM 11121 / KW20 / Rd), this protein is Glycogen synthase (glgA).